A 294-amino-acid polypeptide reads, in one-letter code: Bifunctional protein FolD (294 aa).

NADP(+) contacts are provided by residues 164-166, S193, and I234; that span reads GRS.

Belongs to the tetrahydrofolate dehydrogenase/cyclohydrolase family. As to quaternary structure, homodimer.

The catalysed reaction is (6R)-5,10-methylene-5,6,7,8-tetrahydrofolate + NADP(+) = (6R)-5,10-methenyltetrahydrofolate + NADPH. It carries out the reaction (6R)-5,10-methenyltetrahydrofolate + H2O = (6R)-10-formyltetrahydrofolate + H(+). It functions in the pathway one-carbon metabolism; tetrahydrofolate interconversion. In terms of biological role, catalyzes the oxidation of 5,10-methylenetetrahydrofolate to 5,10-methenyltetrahydrofolate and then the hydrolysis of 5,10-methenyltetrahydrofolate to 10-formyltetrahydrofolate. The sequence is that of Bifunctional protein FolD from Flavobacterium psychrophilum (strain ATCC 49511 / DSM 21280 / CIP 103535 / JIP02/86).